Here is a 386-residue protein sequence, read N- to C-terminus: MKFVDEAVIRVEAGDGGSGCVSFRREKYVPDGGPDGGDGGDGGSVYLQADESFNTLIDFQFERFHRAERGKNGRGRDCTGHGGEDLVLKVPVGTRAIDEETEESLGDLTAHGQRMLVAKGGFHGLGNTRFKSSTNRAPRQKTLGTPGEVRSLKLELMLLADVGLLGMPNAGKSTFIRSVSRAKPKVADYPFTTLVPNLGVVNPRHGQSFVIADIPGLIEGAADGAGLGVRFLKHLERCRVLLHLVDIDPIDGSDPIESARAIVGELEKHSPKLASKPRWLVINKKDLLLEEELQERIDHIVKELEWKGEVFTISAYNREGTEELSLKLVDFIDSLPEEEEVDVEAEVEFKWDNYHKDSDSLNEDFDDSDDDDFDDDDYDVEVIYQR.

An Obg domain is found at 1 to 159 (MKFVDEAVIR…RSLKLELMLL (159 aa)). An OBG-type G domain is found at 160 to 333 (ADVGLLGMPN…LSLKLVDFID (174 aa)). GTP is bound by residues 166–173 (GMPNAGKS), 191–195 (FTTLV), 213–216 (DIPG), 283–286 (NKKD), and 314–316 (SAY). Positions 173 and 193 each coordinate Mg(2+). The tract at residues 356 to 375 (KDSDSLNEDFDDSDDDDFDD) is disordered. A compositionally biased stretch (acidic residues) spans 360–375 (SLNEDFDDSDDDDFDD).

It belongs to the TRAFAC class OBG-HflX-like GTPase superfamily. OBG GTPase family. Monomer. Mg(2+) is required as a cofactor.

It localises to the cytoplasm. An essential GTPase which binds GTP, GDP and possibly (p)ppGpp with moderate affinity, with high nucleotide exchange rates and a fairly low GTP hydrolysis rate. Plays a role in control of the cell cycle, stress response, ribosome biogenesis and in those bacteria that undergo differentiation, in morphogenesis control. The sequence is that of GTPase Obg from Shewanella sediminis (strain HAW-EB3).